We begin with the raw amino-acid sequence, 180 residues long: Large ribosomal subunit protein uL5 (180 aa).

This sequence belongs to the universal ribosomal protein uL5 family. In terms of assembly, part of the 50S ribosomal subunit; part of the 5S rRNA/L5/L18/L25 subcomplex. Contacts the 5S rRNA and the P site tRNA. Forms a bridge to the 30S subunit in the 70S ribosome.

Functionally, this is one of the proteins that bind and probably mediate the attachment of the 5S RNA into the large ribosomal subunit, where it forms part of the central protuberance. In the 70S ribosome it contacts protein S13 of the 30S subunit (bridge B1b), connecting the 2 subunits; this bridge is implicated in subunit movement. Contacts the P site tRNA; the 5S rRNA and some of its associated proteins might help stabilize positioning of ribosome-bound tRNAs. This Streptococcus mutans serotype c (strain ATCC 700610 / UA159) protein is Large ribosomal subunit protein uL5.